The sequence spans 396 residues: LIM/homeobox protein Lhx9 (396 aa).

2 consecutive LIM zinc-binding domains span residues 69–130 and 131–193; these read ALCA…RFSV and QRCA…LIQG. 3 disordered regions span residues 248–272, 328–365, and 377–396; these read ENDA…RMRT, RQEN…TDLT, and SSLD…TNLF. The homeobox DNA-binding region spans 267-326; that stretch reads TKRMRTSFKHHQLRTMKSYFAINHNPDAKDLKQLAQKTGLTKRVLQVWFQNARAKFRRNV. Over residues 352–365 the composition is skewed to low complexity; the sequence is LTPPSTATTLTDLT. Residues 384-396 are compositionally biased toward polar residues; it reads SGSPPQTTLTNLF.

The protein localises to the nucleus. Its function is as follows. May be involved in gonadal development. In Danio rerio (Zebrafish), this protein is LIM/homeobox protein Lhx9 (lhx9).